The sequence spans 1067 residues: Ubiquitin carboxyl-terminal hydrolase 26 (1067 aa).

Over residues 1–12 the composition is skewed to basic residues; that stretch reads MSRPNTRNKNKR. A disordered region spans residues 1 to 22; the sequence is MSRPNTRNKNKRQRPDAVDSSS. Positions 106–442 constitute a USP domain; it reads AGLTNLGATC…DAYMLMYSLR (337 aa). The active-site Nucleophile is Cys115. The active-site Proton acceptor is the His359. Residues 385-418 form a disordered region; the sequence is KRPCNEASSSTPQSESNGTASSGNITDGIQSGSS. The segment covering 390-418 has biased composition (polar residues); it reads EASSSTPQSESNGTASSGNITDGIQSGSS. DUSP domains follow at residues 503-595, 610-711, and 738-861; these read NALT…GDYC, DSYR…DCTC, and TLKV…SAFI. The Ubiquitin-like domain occupies 948–1031; the sequence is FEVDRRTSKR…LWVRDTEMHE (84 aa).

Belongs to the peptidase C19 family. Expressed in seedlings, roots, stems, leaves and inflorescences.

The protein resides in the nucleus. The catalysed reaction is Thiol-dependent hydrolysis of ester, thioester, amide, peptide and isopeptide bonds formed by the C-terminal Gly of ubiquitin (a 76-residue protein attached to proteins as an intracellular targeting signal).. In terms of biological role, recognizes and hydrolyzes the peptide bond at the C-terminal Gly of ubiquitin. Involved in the processing of poly-ubiquitin precursors as well as that of ubiquitinated proteins. Deubiquitinates H2BK143ub1 of histone H2B. The polypeptide is Ubiquitin carboxyl-terminal hydrolase 26 (UBP26) (Arabidopsis thaliana (Mouse-ear cress)).